A 114-amino-acid chain; its full sequence is Large ribosomal subunit protein bL21c (114 aa).

This sequence belongs to the bacterial ribosomal protein bL21 family. As to quaternary structure, part of the 50S ribosomal subunit.

It localises to the plastid. Its subcellular location is the chloroplast. Its function is as follows. This protein binds to 23S rRNA. The protein is Large ribosomal subunit protein bL21c of Staurastrum punctulatum (Green alga).